The sequence spans 122 residues: Small ribosomal subunit protein uS13 (122 aa).

Residues 97–122 (PVRGQRTHTNAKTRKGRSRLPIAGKK) form a disordered region.

The protein belongs to the universal ribosomal protein uS13 family. As to quaternary structure, part of the 30S ribosomal subunit. Forms a loose heterodimer with protein S19. Forms two bridges to the 50S subunit in the 70S ribosome.

Located at the top of the head of the 30S subunit, it contacts several helices of the 16S rRNA. In the 70S ribosome it contacts the 23S rRNA (bridge B1a) and protein L5 of the 50S subunit (bridge B1b), connecting the 2 subunits; these bridges are implicated in subunit movement. Contacts the tRNAs in the A and P-sites. The sequence is that of Small ribosomal subunit protein uS13 from Wolbachia pipientis wMel.